Consider the following 206-residue polypeptide: Large ribosomal subunit protein uL4 (206 aa).

Belongs to the universal ribosomal protein uL4 family. In terms of assembly, part of the 50S ribosomal subunit.

One of the primary rRNA binding proteins, this protein initially binds near the 5'-end of the 23S rRNA. It is important during the early stages of 50S assembly. It makes multiple contacts with different domains of the 23S rRNA in the assembled 50S subunit and ribosome. In terms of biological role, forms part of the polypeptide exit tunnel. This chain is Large ribosomal subunit protein uL4, found in Nitrobacter winogradskyi (strain ATCC 25391 / DSM 10237 / CIP 104748 / NCIMB 11846 / Nb-255).